A 312-amino-acid chain; its full sequence is Expansin-A24 (312 aa).

Positions 1-27 (MELLKRKLYAKILMMVMVIWIAPMTNG) are cleaved as a signal peptide. The disordered stretch occupies residues 31–86 (ASHVPGGRPGAHPSHGAHPAHGAHPSHGAHPSHGAHPSHGAHPSHGALPSHGGQVP). Positions 40–77 (GAHPSHGAHPAHGAHPSHGAHPSHGAHPSHGAHPSHGA) are enriched in low complexity. A run of 6 repeats spans residues 42 to 47 (HPSHGA), 48 to 53 (HPAHGA), 54 to 59 (HPSHGA), 60 to 65 (HPSHGA), 66 to 71 (HPSHGA), and 72 to 77 (HPSHGA). The 6 X 6 AA tandem repeats of H-P-S-H-G-A stretch occupies residues 42-77 (HPSHGAHPAHGAHPSHGAHPSHGAHPSHGAHPSHGA). Positions 108–218 (QGACGYGDLH…RRVPCAKIGG (111 aa)) constitute an Expansin-like EG45 domain. Residues 228-307 (HFLMILPYNV…DWKCNGQSFD (80 aa)) form the Expansin-like CBD domain.

The protein belongs to the expansin family. Expansin A subfamily.

Its subcellular location is the secreted. The protein resides in the cell wall. The protein localises to the membrane. Causes loosening and extension of plant cell walls by disrupting non-covalent bonding between cellulose microfibrils and matrix glucans. No enzymatic activity has been found. This chain is Expansin-A24 (EXPA24), found in Arabidopsis thaliana (Mouse-ear cress).